A 325-amino-acid polypeptide reads, in one-letter code: Biotin synthase (325 aa).

A Radical SAM core domain is found at 49–279; the sequence is VGDKVELCSI…DKNIRYAGGR (231 aa). Residues Cys66, Cys70, and Cys73 each contribute to the [4Fe-4S] cluster site. [2Fe-2S] cluster contacts are provided by Cys144, Cys204, and Arg274.

It belongs to the radical SAM superfamily. Biotin synthase family. Homodimer. Requires [4Fe-4S] cluster as cofactor. [2Fe-2S] cluster is required as a cofactor.

The enzyme catalyses (4R,5S)-dethiobiotin + (sulfur carrier)-SH + 2 reduced [2Fe-2S]-[ferredoxin] + 2 S-adenosyl-L-methionine = (sulfur carrier)-H + biotin + 2 5'-deoxyadenosine + 2 L-methionine + 2 oxidized [2Fe-2S]-[ferredoxin]. Its pathway is cofactor biosynthesis; biotin biosynthesis; biotin from 7,8-diaminononanoate: step 2/2. In terms of biological role, catalyzes the conversion of dethiobiotin (DTB) to biotin by the insertion of a sulfur atom into dethiobiotin via a radical-based mechanism. In Carboxydothermus hydrogenoformans (strain ATCC BAA-161 / DSM 6008 / Z-2901), this protein is Biotin synthase.